A 70-amino-acid chain; its full sequence is Large ribosomal subunit protein bL31 (70 aa).

Residues C16, C18, C37, and C40 each coordinate Zn(2+).

Belongs to the bacterial ribosomal protein bL31 family. Type A subfamily. In terms of assembly, part of the 50S ribosomal subunit. The cofactor is Zn(2+).

Its function is as follows. Binds the 23S rRNA. The polypeptide is Large ribosomal subunit protein bL31 (Shewanella sediminis (strain HAW-EB3)).